Reading from the N-terminus, the 60-residue chain is Large ribosomal subunit protein uL30 (60 aa).

It belongs to the universal ribosomal protein uL30 family. As to quaternary structure, part of the 50S ribosomal subunit.

The polypeptide is Large ribosomal subunit protein uL30 (Shewanella baltica (strain OS223)).